We begin with the raw amino-acid sequence, 61 residues long: UPF0391 membrane protein Pnap_0032 (61 aa).

2 helical membrane passes run 5-25 (AIIFAVISLIAGALGFSGVAA) and 33-53 (VLFGLFLILAVIFIVLAALGV).

It belongs to the UPF0391 family.

It is found in the cell membrane. The protein is UPF0391 membrane protein Pnap_0032 of Polaromonas naphthalenivorans (strain CJ2).